The following is a 146-amino-acid chain: Ribonuclease H (146 aa).

An RNase H type-1 domain is found at 1 to 141; sequence MKKVQLITDG…CDELATRAAR (141 aa). The Mg(2+) site is built by D9, E47, D69, and D133.

Belongs to the RNase H family. As to quaternary structure, monomer. Requires Mg(2+) as cofactor.

The protein localises to the cytoplasm. It catalyses the reaction Endonucleolytic cleavage to 5'-phosphomonoester.. In terms of biological role, endonuclease that specifically degrades the RNA of RNA-DNA hybrids. This chain is Ribonuclease H, found in Solibacter usitatus (strain Ellin6076).